The chain runs to 347 residues: Phenylalanine--tRNA ligase alpha subunit (347 aa).

Glu-261 is a Mg(2+) binding site.

The protein belongs to the class-II aminoacyl-tRNA synthetase family. Phe-tRNA synthetase alpha subunit type 1 subfamily. As to quaternary structure, tetramer of two alpha and two beta subunits. Mg(2+) serves as cofactor.

The protein localises to the cytoplasm. It catalyses the reaction tRNA(Phe) + L-phenylalanine + ATP = L-phenylalanyl-tRNA(Phe) + AMP + diphosphate + H(+). This chain is Phenylalanine--tRNA ligase alpha subunit, found in Streptococcus thermophilus (strain ATCC BAA-491 / LMD-9).